A 446-amino-acid polypeptide reads, in one-letter code: D(1A) dopamine receptor (446 aa).

At 1-22 the chain is on the extracellular side; the sequence is MAPNTSTMDEAGLPAERDFSFR. N4 is a glycosylation site (N-linked (GlcNAc...) asparagine). Residues 23–48 form a helical membrane-spanning segment; it reads ILTACFLSLLILSTLLGNTLVCAAVI. Over 49–59 the chain is Cytoplasmic; sequence RFRHLRSKVTN. A helical transmembrane segment spans residues 60–86; that stretch reads FFVISLAVSDLLVAVLVMPWKAVAEIA. Residues 87–95 are Extracellular-facing; the sequence is GFWPLGPFC. An intrachain disulfide couples C95 to C186. A helical membrane pass occupies residues 96 to 118; that stretch reads NIWVAFDIMCSTASILNLCVISV. Residues 119–137 lie on the Cytoplasmic side of the membrane; sequence DRYWAISSPFQYERKMTPK. Residues 138-162 traverse the membrane as a helical segment; the sequence is AAFILISVAWTLSVLISFIPVQLSW. Over 163–192 the chain is Extracellular; that stretch reads HKAKPTWPLDGNFTSLEDTEDDNCDTRLSR. A helical membrane pass occupies residues 193–218; that stretch reads TYAISSSLISFYIPVAIMIVTYTSIY. At 219–272 the chain is on the cytoplasmic side; sequence RIAQKQIRRISALERAAVHAKNCQTTAGNGNPVECAQSESSFKMSFKRETKVLK. The helical transmembrane segment at 273–299 threads the bilayer; that stretch reads TLSVIMGVFVCCWLPFFISNCMVPFCG. At 300–312 the chain is on the extracellular side; the sequence is SEETQPFCIDSIT. The helical transmembrane segment at 313–337 threads the bilayer; it reads FDVFVWFGWANSSLNPIIYAFNADF. Over 338-446 the chain is Cytoplasmic; sequence QKAFSTLLGC…PVTHSGQHST (109 aa). 2 S-palmitoyl cysteine lipidation sites follow: C347 and C351.

This sequence belongs to the G-protein coupled receptor 1 family. Interacts with DNAJC14 via its C-terminus PubMed:11331877. Interacts with DRD2. Interacts with DORIP1. In terms of processing, N-glycosylated. As to expression, brain, in the striatum, the nucleus accumbens, and the olfactory tubercle.

The protein resides in the cell membrane. It is found in the endoplasmic reticulum membrane. It localises to the cell projection. Its subcellular location is the dendrite. The protein localises to the cilium membrane. The protein resides in the dendritic spine. In terms of biological role, dopamine receptor whose activity is mediated by G proteins which activate adenylyl cyclase. This is D(1A) dopamine receptor (Drd1) from Rattus norvegicus (Rat).